Consider the following 222-residue polypeptide: Leucyl/phenylalanyl-tRNA--protein transferase (222 aa).

It belongs to the L/F-transferase family.

It localises to the cytoplasm. It catalyses the reaction N-terminal L-lysyl-[protein] + L-leucyl-tRNA(Leu) = N-terminal L-leucyl-L-lysyl-[protein] + tRNA(Leu) + H(+). It carries out the reaction N-terminal L-arginyl-[protein] + L-leucyl-tRNA(Leu) = N-terminal L-leucyl-L-arginyl-[protein] + tRNA(Leu) + H(+). The catalysed reaction is L-phenylalanyl-tRNA(Phe) + an N-terminal L-alpha-aminoacyl-[protein] = an N-terminal L-phenylalanyl-L-alpha-aminoacyl-[protein] + tRNA(Phe). Its function is as follows. Functions in the N-end rule pathway of protein degradation where it conjugates Leu, Phe and, less efficiently, Met from aminoacyl-tRNAs to the N-termini of proteins containing an N-terminal arginine or lysine. This is Leucyl/phenylalanyl-tRNA--protein transferase from Legionella pneumophila (strain Corby).